A 214-amino-acid chain; its full sequence is Pyridoxine/pyridoxamine 5'-phosphate oxidase (214 aa).

Substrate contacts are provided by residues 8-11 and Lys-66; that span reads RINY. Residues 61 to 66, 76 to 77, Arg-82, Lys-83, and Gln-105 each bind FMN; these read RIVLIK and FT. Tyr-123, Arg-127, and Ser-131 together coordinate substrate. Residues 140–141 and Trp-184 contribute to the FMN site; that span reads QS. 190-192 serves as a coordination point for substrate; sequence RLH. Residue Arg-194 coordinates FMN.

It belongs to the pyridoxamine 5'-phosphate oxidase family. As to quaternary structure, homodimer. The cofactor is FMN.

The catalysed reaction is pyridoxamine 5'-phosphate + O2 + H2O = pyridoxal 5'-phosphate + H2O2 + NH4(+). It catalyses the reaction pyridoxine 5'-phosphate + O2 = pyridoxal 5'-phosphate + H2O2. The protein operates within cofactor metabolism; pyridoxal 5'-phosphate salvage; pyridoxal 5'-phosphate from pyridoxamine 5'-phosphate: step 1/1. It participates in cofactor metabolism; pyridoxal 5'-phosphate salvage; pyridoxal 5'-phosphate from pyridoxine 5'-phosphate: step 1/1. Its function is as follows. Catalyzes the oxidation of either pyridoxine 5'-phosphate (PNP) or pyridoxamine 5'-phosphate (PMP) into pyridoxal 5'-phosphate (PLP). The sequence is that of Pyridoxine/pyridoxamine 5'-phosphate oxidase from Burkholderia orbicola (strain MC0-3).